We begin with the raw amino-acid sequence, 90 residues long: Small ribosomal subunit protein bS20 (90 aa).

Belongs to the bacterial ribosomal protein bS20 family.

Binds directly to 16S ribosomal RNA. This Desulfitobacterium hafniense (strain DSM 10664 / DCB-2) protein is Small ribosomal subunit protein bS20.